A 440-amino-acid chain; its full sequence is Calcium/calmodulin-regulated receptor-like kinase 1 (440 aa).

Residues 8–28 (LIVGISLGLVIGVVLAISALF) form a helical membrane-spanning segment. The tract at residues 28-228 (FCFRYHRKKS…ARGLEYLHDG (201 aa)) is calmodulin binding. Positions 113-380 (CNFTTLIGQG…DIVQVLTRVI (268 aa)) constitute a Protein kinase domain. ATP is bound by residues 119-127 (IGQGAFGPV) and K141. Y186 carries the post-translational modification Phosphotyrosine. The active-site Proton acceptor is D237. Residue S241 is modified to Phosphoserine. At T274 the chain carries Phosphothreonine. Y282 carries the post-translational modification Phosphotyrosine. The calmodulin binding stretch occupies residues 369–440 (MRDIVQVLTR…DSSIAEDVIL (72 aa)). The tract at residues 386–427 (RKRQKNSPSPSPRLPPPPPIVEESEGELTANGSLRSEIHRRD) is disordered. Residues 394–405 (SPSPRLPPPPPI) show a composition bias toward pro residues.

It belongs to the protein kinase superfamily. Ser/Thr protein kinase family. In terms of assembly, interacts with calmodulin (CaM) in a calcium- (Ca(2+)-) dependent manner. Binds to MEKK1. As to expression, similar transcript expression levels in seedlings, roots, leaves, stems and flowers, and lower levels in siliques, but protein accumulates mostly in 7-day-old seedlings, old roots and young leaves and, to a lower extent, in young roots, old leaves, flowers and siliques (at protein level).

It localises to the cell membrane. The protein localises to the endosome membrane. The enzyme catalyses L-seryl-[protein] + ATP = O-phospho-L-seryl-[protein] + ADP + H(+). It catalyses the reaction L-threonyl-[protein] + ATP = O-phospho-L-threonyl-[protein] + ADP + H(+). Kinase activity is stimulated by calcium/calmodulin, but blocked by chlorpromazine. Its function is as follows. Required for cold tolerance, via the activation of MAP kinases activity. Phosphorylates and activates MEKK1 in response to cold in a calcium-dependent manner. In Arabidopsis thaliana (Mouse-ear cress), this protein is Calcium/calmodulin-regulated receptor-like kinase 1.